Reading from the N-terminus, the 275-residue chain is TATA-box-binding protein (275 aa).

Disordered regions lie at residues 23-45 (EDESIQTQQQQQTPRHPASFGMN) and 73-92 (GSMSIYGPGTPAPATPHTPA). Tandem repeats lie at residues 103 to 179 (LENI…ARIV) and 193 to 270 (IQNM…YPIL).

It belongs to the TBP family. Belongs to the TFIID complex together with the TBP-associated factors (TAFs). Binds DNA as monomer.

Its subcellular location is the nucleus. General transcription factor that functions at the core of the DNA-binding multiprotein factor TFIID. Binding of TFIID to the TATA box is the initial transcriptional step of the pre-initiation complex (PIC), playing a role in the activation of eukaryotic genes transcribed by RNA polymerase II. The chain is TATA-box-binding protein from Artemia franciscana (Brine shrimp).